A 618-amino-acid polypeptide reads, in one-letter code: GMC oxidoreductase family protein Mala s 12 (618 aa).

The signal sequence occupies residues 1–23; sequence MKGIVSWAVVSAALVLSATESLA. Residues Val129 and Val280 each contribute to the FAD site. Residue His556 is the Proton donor of the active site. His599 serves as the catalytic Proton acceptor.

The protein belongs to the GMC oxidoreductase family. As to quaternary structure, monomer. FAD is required as a cofactor.

The protein resides in the secreted. In Malassezia sympodialis (strain ATCC 42132) (Atopic eczema-associated yeast), this protein is GMC oxidoreductase family protein Mala s 12.